The sequence spans 427 residues: 3-phosphoshikimate 1-carboxyvinyltransferase (427 aa).

3-phosphoshikimate-binding residues include Lys22, Ser23, and Arg27. Lys22 contacts phosphoenolpyruvate. Phosphoenolpyruvate contacts are provided by Gly93 and Arg122. 3-phosphoshikimate-binding residues include Ser167, Gln169, Asp315, and Lys342. Phosphoenolpyruvate is bound at residue Gln169. Asp315 serves as the catalytic Proton acceptor. Arg346 and Arg387 together coordinate phosphoenolpyruvate.

The protein belongs to the EPSP synthase family. Monomer.

It is found in the cytoplasm. The enzyme catalyses 3-phosphoshikimate + phosphoenolpyruvate = 5-O-(1-carboxyvinyl)-3-phosphoshikimate + phosphate. The protein operates within metabolic intermediate biosynthesis; chorismate biosynthesis; chorismate from D-erythrose 4-phosphate and phosphoenolpyruvate: step 6/7. Its function is as follows. Catalyzes the transfer of the enolpyruvyl moiety of phosphoenolpyruvate (PEP) to the 5-hydroxyl of shikimate-3-phosphate (S3P) to produce enolpyruvyl shikimate-3-phosphate and inorganic phosphate. The chain is 3-phosphoshikimate 1-carboxyvinyltransferase from Thermus thermophilus (strain ATCC 27634 / DSM 579 / HB8).